The chain runs to 276 residues: Bifunctional protein FolD (276 aa).

Residues 158-160 (NRS), S183, and I224 each bind NADP(+).

This sequence belongs to the tetrahydrofolate dehydrogenase/cyclohydrolase family. In terms of assembly, homodimer.

The catalysed reaction is (6R)-5,10-methylene-5,6,7,8-tetrahydrofolate + NADP(+) = (6R)-5,10-methenyltetrahydrofolate + NADPH. It carries out the reaction (6R)-5,10-methenyltetrahydrofolate + H2O = (6R)-10-formyltetrahydrofolate + H(+). It participates in one-carbon metabolism; tetrahydrofolate interconversion. In terms of biological role, catalyzes the oxidation of 5,10-methylenetetrahydrofolate to 5,10-methenyltetrahydrofolate and then the hydrolysis of 5,10-methenyltetrahydrofolate to 10-formyltetrahydrofolate. The protein is Bifunctional protein FolD of Picrophilus torridus (strain ATCC 700027 / DSM 9790 / JCM 10055 / NBRC 100828 / KAW 2/3).